The following is a 60-amino-acid chain: Ixodegrin-Ip (60 aa).

The first 21 residues, 1-21 (MNAAFIAALFILGALTLDAMA), serve as a signal peptide directing secretion. Residues 49-51 (RGD) carry the Cell attachment site motif.

The protein belongs to the ixodegrin family. In terms of processing, contains 3 disulfide bonds. In terms of tissue distribution, expressed in salivary glands.

Its subcellular location is the secreted. Functionally, tick salivary platelet aggregation inhibitor that plays an important part in the anti-hemostatic strategy of ticks. Inhibits platelet aggregation induced by ADP, thrombin and thromboxane A2 (TXA2). Blocks platelet adhesion to soluble collagen (most probably through the binding to alpha-2/beta-1 integrin (ITGA2/ITGB1)) and binds to purified glycoprotein IIb/IIIa (ITGA2B/ITGB3) in a dose-dependent manner. In vivo, reduces thrombus weight effectively in a rat arteriovenous shunt model and inhibits thrombosis in a carrageenan-induced mouse tail thrombosis model. This chain is Ixodegrin-Ip, found in Ixodes pacificus (Western black-legged tick).